Reading from the N-terminus, the 1247-residue chain is Nidogen-1 (1247 aa).

Residues 1–28 form the signal peptide; sequence MLASSSRIRAAWTRALLLPLLLAGPVGC. The NIDO domain maps to 106–268; it reads PFLADLDTTD…GVWVFEIGSP (163 aa). Tyrosine 289 and tyrosine 296 each carry sulfotyrosine. The 41-residue stretch at 386–426 folds into the EGF-like 1 domain; sequence SRQTCANNRHQCSVHAECRDYATGFCCSCVAGYTGNGRQCV. Disulfide bonds link cysteine 390/cysteine 403, cysteine 397/cysteine 412, cysteine 411/cysteine 618, cysteine 414/cysteine 425, cysteine 672/cysteine 685, cysteine 679/cysteine 695, cysteine 697/cysteine 708, cysteine 714/cysteine 727, cysteine 721/cysteine 736, cysteine 738/cysteine 750, cysteine 762/cysteine 777, cysteine 769/cysteine 787, cysteine 789/cysteine 800, cysteine 806/cysteine 817, cysteine 811/cysteine 826, cysteine 828/cysteine 839, cysteine 849/cysteine 878, cysteine 889/cysteine 896, and cysteine 898/cysteine 919. The region spanning 430 to 667 is the Nidogen G2 beta-barrel domain; it reads SPQRVNGKVK…GPVREGSPDA (238 aa). Positions 668–709 constitute an EGF-like 2 domain; sequence LQNPCYIGTHGCDTNAACRPGPRTQFTCECSIGFRGDGRTCY. Residues 702 to 704 carry the Cell attachment site motif; that stretch reads RGD. The EGF-like 3; calcium-binding domain maps to 710–751; the sequence is DIDECSEQPSVCGSHTICNNHPGTFRCECVEGYQFSDEGTCV. Positions 758 to 801 constitute an EGF-like 4 domain; the sequence is PINYCETGLHNCDIPQRAQCIYTGGSSYTCSCLPGFSGDGQACQ. Positions 802–840 constitute an EGF-like 5; calcium-binding domain; the sequence is DVDECQPSRCHPDAFCYNTPGSFTCQCKPGYQGDGFRCV. Residues 846–919 form the Thyroglobulin type-1 domain; it reads KTRCQHEREH…RTRPGMTPPC (74 aa). O-linked (GalNAc...) threonine glycans are attached at residues threonine 922 and threonine 935. LDL-receptor class B repeat units lie at residues 990–1032, 1033–1075, 1076–1120, and 1121–1162; these read KMVY…DHLG, RNIF…DSVR, GNLY…DAFS, and SQLC…YGKN. One can recognise an EGF-like 6 domain in the interval 1208 to 1244; it reads GHNYCSVNNGGCTHLCLATPGSRTCRCPDNTLGVDCI. 3 disulfide bridges follow: cysteine 1212-cysteine 1223, cysteine 1219-cysteine 1232, and cysteine 1234-cysteine 1243.

In terms of assembly, interacts with FBLN1. Interacts with LGALS3BP. Interacts with PLXDC1. Interacts with SVEP1. Post-translationally, N- and O-glycosylated.

Its subcellular location is the secreted. It localises to the extracellular space. The protein localises to the extracellular matrix. It is found in the basement membrane. Sulfated glycoprotein widely distributed in basement membranes and tightly associated with laminin. Also binds to collagen IV and perlecan. It probably has a role in cell-extracellular matrix interactions. In Homo sapiens (Human), this protein is Nidogen-1 (NID1).